The primary structure comprises 556 residues: MPAVCESLLDDIEDMVSATDPKPHDRQSARKNIVPRARKRNKNNIQEEEPPADSTIPGTQKIWIRTWGCSHNNSDGEYMAGQLAAYGYSITEQPEKADLWLLNSCTVKSPAEDHFRNSIKKAQEANKKVVVSGCVPQAQPRQDYMKGLSIIGVQQIDRVVEVVEETIKGHSVRLLGQKKDNGKRLGGARLDLPKIRKNPLIEIISINTGCLNACTYCKTKHARGELASYPVEELVDRATQSFQEGVCEIWLTSEDTGAYGRDIGTDLPTLLWKLVEVIPEGAMLRLGMTNPPYILEHLEEMAKILNHPRVYAFLHIPVQSASDSVLMDMKREYCIADFKRVVDFLKERVPGITIATDIICGFPGETDEDFKETLKLVEEYKFPSLFINQFYPRPGTPAAKMEQVLAHVKKRRTKELSQLFHSYDPYDHKIGQKQQVLVTEESFDSQYYVAHNRFYEQVLVPKDPDFMGKMVEVKIFEAGKHFMKGQPVQDSYIYTPSITKPLAKGEVSGLTEELKPPNNIPKSETLLEKHWERLQVFLFLTALLAAVIAFVGTKLV.

Residues 17-57 (SATDPKPHDRQSARKNIVPRARKRNKNNIQEEEPPADSTIP) are disordered. The 109-residue stretch at 60–168 (QKIWIRTWGC…VVEVVEETIK (109 aa)) folds into the MTTase N-terminal domain. Positions 69, 105, 134, 210, 214, and 217 each coordinate [4Fe-4S] cluster. The Radical SAM core domain maps to 196–427 (RKNPLIEIIS…QLFHSYDPYD (232 aa)). One can recognise a TRAM domain in the interval 427–489 (DHKIGQKQQV…KHFMKGQPVQ (63 aa)). Residues 536 to 556 (VFLFLTALLAAVIAFVGTKLV) traverse the membrane as a helical segment.

The protein belongs to the methylthiotransferase family. CDKAL1 subfamily. [4Fe-4S] cluster is required as a cofactor.

The protein resides in the endoplasmic reticulum membrane. It carries out the reaction N(6)-L-threonylcarbamoyladenosine(37) in tRNA + (sulfur carrier)-SH + AH2 + 2 S-adenosyl-L-methionine = 2-methylsulfanyl-N(6)-L-threonylcarbamoyladenosine(37) in tRNA + (sulfur carrier)-H + 5'-deoxyadenosine + L-methionine + A + S-adenosyl-L-homocysteine + 2 H(+). Functionally, catalyzes the methylthiolation of N6-threonylcarbamoyladenosine (t(6)A), leading to the formation of 2-methylthio-N6-threonylcarbamoyladenosine (ms(2)t(6)A) at position 37 in tRNAs that read codons beginning with adenine. This is Threonylcarbamoyladenosine tRNA methylthiotransferase (cdkal1) from Xenopus laevis (African clawed frog).